A 388-amino-acid chain; its full sequence is Mannitol-1-phosphate 5-dehydrogenase (388 aa).

4 to 15 serves as a coordination point for NAD(+); the sequence is AVHFGAGNIGRG.

It belongs to the mannitol dehydrogenase family.

It carries out the reaction D-mannitol 1-phosphate + NAD(+) = beta-D-fructose 6-phosphate + NADH + H(+). In Thermoanaerobacter pseudethanolicus (strain ATCC 33223 / 39E) (Clostridium thermohydrosulfuricum), this protein is Mannitol-1-phosphate 5-dehydrogenase.